The primary structure comprises 454 residues: Zeatin O-xylosyltransferase (454 aa).

This sequence belongs to the UDP-glycosyltransferase family. High level in young seeds, less in older seeds and very low in roots.

The enzyme catalyses zeatin + UDP-alpha-D-xylose = O-beta-D-xylosylzeatin + UDP + H(+). In terms of biological role, utilizes UDP-xylose as the sugar donor and catalyzes the formation of o-xylosylzeatin from zeatin. Does not act on UDP-glucose. The protein is Zeatin O-xylosyltransferase of Phaseolus vulgaris (Kidney bean).